The sequence spans 357 residues: Quinolinate synthase (357 aa).

Iminosuccinate contacts are provided by H50 and S71. C116 provides a ligand contact to [4Fe-4S] cluster. Iminosuccinate is bound by residues 142–144 and S159; that span reads YAN. C203 contacts [4Fe-4S] cluster. Iminosuccinate is bound by residues 229 to 231 and T246; that span reads HPE. C300 lines the [4Fe-4S] cluster pocket.

It belongs to the quinolinate synthase family. Type 1 subfamily. Requires [4Fe-4S] cluster as cofactor.

It is found in the cytoplasm. The catalysed reaction is iminosuccinate + dihydroxyacetone phosphate = quinolinate + phosphate + 2 H2O + H(+). It functions in the pathway cofactor biosynthesis; NAD(+) biosynthesis; quinolinate from iminoaspartate: step 1/1. Its function is as follows. Catalyzes the condensation of iminoaspartate with dihydroxyacetone phosphate to form quinolinate. The sequence is that of Quinolinate synthase from Shewanella oneidensis (strain ATCC 700550 / JCM 31522 / CIP 106686 / LMG 19005 / NCIMB 14063 / MR-1).